A 446-amino-acid polypeptide reads, in one-letter code: Branched-chain amino acid permease BrnQ (446 aa).

12 helical membrane passes run 13-33, 41-61, 81-101, 120-140, 154-174, 196-216, 237-257, 285-305, 325-345, 347-367, 381-401, and 421-441; these read ISSM…PAYL, LWIS…LAIA, KYSY…FAIP, MAKS…MLFF, FLTP…LLHP, VLAG…IIVI, TGVL…LVGA, GAVI…IGLI, WAII…TTII, FSLP…LLAL, IMTA…LPAG, and GLGW…KGVI.

Belongs to the branched chain amino acid transporter family.

The protein localises to the cell membrane. With respect to regulation, leucine uptake is inhibited by the proton ionophore carbonyl cyanide m-chlorophenylhydrazone (CCCP). Its function is as follows. Branched chain amino acid transport system which is involved in the uptake of leucine, valine and isoleucine. The proton motive force is probably the driving force for transport. The polypeptide is Branched-chain amino acid permease BrnQ (Lactobacillus delbrueckii subsp. lactis).